The primary structure comprises 224 residues: Large ribosomal subunit protein uL4 (224 aa).

The tract at residues 52 to 109 (AAARQGTHSTKTRGDVSGGGRKPYRQKGTGRARQGSTRAPQFTGGGVVHGPKPRDYSQ) is disordered.

The protein belongs to the universal ribosomal protein uL4 family. As to quaternary structure, part of the 50S ribosomal subunit.

One of the primary rRNA binding proteins, this protein initially binds near the 5'-end of the 23S rRNA. It is important during the early stages of 50S assembly. It makes multiple contacts with different domains of the 23S rRNA in the assembled 50S subunit and ribosome. Its function is as follows. Forms part of the polypeptide exit tunnel. The polypeptide is Large ribosomal subunit protein uL4 (Mycobacterium marinum (strain ATCC BAA-535 / M)).